A 144-amino-acid polypeptide reads, in one-letter code: Large ribosomal subunit protein uL15 (144 aa).

Residues 1–57 (MKLNDLSPAPGSRREKHRPGRGIGSGLGKTGGRGHKGQTSRSGGTIAPGFEGGQQPL) are disordered. Residues 21 to 31 (RGIGSGLGKTG) show a composition bias toward gly residues.

It belongs to the universal ribosomal protein uL15 family. In terms of assembly, part of the 50S ribosomal subunit.

In terms of biological role, binds to the 23S rRNA. This is Large ribosomal subunit protein uL15 from Pseudomonas fluorescens (strain ATCC BAA-477 / NRRL B-23932 / Pf-5).